A 585-amino-acid polypeptide reads, in one-letter code: Organic cation transporter 1 (585 aa).

At 1-40 the chain is on the cytoplasmic side; it reads MSFQAMETFAEISQEILMSATKPPDFDFVLEQVGNYGTYQ. The chain crosses the membrane as a helical span at residues 41 to 61; it reads IVFFFIICLPTSLPSAFSAFN. Over 62–155 the chain is Extracellular; sequence IPFVVGNPPH…LVCDQQAWIE (94 aa). N-linked (GlcNAc...) asparagine glycans are attached at residues Asn87, Asn98, and Asn133. A helical transmembrane segment spans residues 156 to 176; it reads ISTTSFYVGSFIGNCLFGYVA. Residues 177–184 lie on the Cytoplasmic side of the membrane; that stretch reads DKFGRRRS. Residues 185–205 traverse the membrane as a helical segment; that stretch reads FFVILTVLIVCGTASSFAKDI. The Extracellular portion of the chain corresponds to 206–212; sequence ESFIILR. Residues 213 to 233 traverse the membrane as a helical segment; the sequence is FFTGLAFPALFQIPFIICMEF. Residues 234–243 are Cytoplasmic-facing; sequence MGNSGRIFSG. Residues 244–264 form a helical membrane-spanning segment; it reads LMTSLFFGAAMALLGVVAMFI. At 265-269 the chain is on the extracellular side; that stretch reads RRWRQ. The chain crosses the membrane as a helical span at residues 270 to 290; sequence LTFFCNAPFAFYIIYYFFLPE. Over 291–360 the chain is Cytoplasmic; it reads SPRWSVSVGK…FKTPNLRRKT (70 aa). The chain crosses the membrane as a helical span at residues 361–381; it reads LIVTYIWVMNAIIYNGLTLNV. At 382 to 389 the chain is on the extracellular side; the sequence is SNLPVDDY. The chain crosses the membrane as a helical span at residues 390-410; the sequence is WSFIINGAVELPGYFVVWPLL. The Cytoplasmic segment spans residues 411-416; sequence QCAGRR. A helical transmembrane segment spans residues 417-437; that stretch reads WTLAATMIVCGIGCVSAMFMP. Over 438–446 the chain is Extracellular; the sequence is DGYPWLVAS. The chain crosses the membrane as a helical span at residues 447-467; that stretch reads ASFIGKFGVGSGFAVIYIFAG. The Cytoplasmic segment spans residues 468 to 476; that stretch reads ELYPTVVRA. Residues 477 to 497 form a helical membrane-spanning segment; that stretch reads IGMGMSSMVAGSGLLLAPHIV. Over 498–504 the chain is Extracellular; that stretch reads NLGKIVK. A helical transmembrane segment spans residues 505–525; it reads ILPLLIMGLMALSAGILTFFL. Residues 526–585 lie on the Cytoplasmic side of the membrane; it reads PETLGAPLPMTIEDAENFGKKPEPDSGMFTQAAKKRESQPLLEPHTPMDRRRRSSRLMNI. The interval 544–585 is disordered; the sequence is GKKPEPDSGMFTQAAKKRESQPLLEPHTPMDRRRRSSRLMNI. The span at 575–585 shows a compositional bias: basic residues; the sequence is RRRRSSRLMNI.

Belongs to the major facilitator (TC 2.A.1) superfamily. Organic cation transporter (TC 2.A.1.19) family.

The protein resides in the membrane. Transports organic cations such as tetraethylammonium (TEA). Displays a broad substrate specificity. This Caenorhabditis elegans protein is Organic cation transporter 1 (oct-1).